The primary structure comprises 203 residues: Proteasome subunit beta 2 (203 aa).

Residues 1 to 10 constitute a propeptide, removed in mature form; by autocatalysis; the sequence is MNLQNKILKG. T11 functions as the Nucleophile in the catalytic mechanism.

The protein belongs to the peptidase T1B family. In terms of assembly, the 20S proteasome core is composed of 14 alpha and 14 beta subunits that assemble into four stacked heptameric rings, resulting in a barrel-shaped structure. The two inner rings, each composed of seven catalytic beta subunits, are sandwiched by two outer rings, each composed of seven alpha subunits. The catalytic chamber with the active sites is on the inside of the barrel. Has a gated structure, the ends of the cylinder being occluded by the N-termini of the alpha-subunits. Is capped at one or both ends by the proteasome regulatory ATPase, PAN.

The protein resides in the cytoplasm. It catalyses the reaction Cleavage of peptide bonds with very broad specificity.. Its activity is regulated as follows. The formation of the proteasomal ATPase PAN-20S proteasome complex, via the docking of the C-termini of PAN into the intersubunit pockets in the alpha-rings, triggers opening of the gate for substrate entry. Interconversion between the open-gate and close-gate conformations leads to a dynamic regulation of the 20S proteasome proteolysis activity. Component of the proteasome core, a large protease complex with broad specificity involved in protein degradation. This is Proteasome subunit beta 2 from Sulfolobus acidocaldarius (strain ATCC 33909 / DSM 639 / JCM 8929 / NBRC 15157 / NCIMB 11770).